The chain runs to 302 residues: MHDLLNEILDEVRPLLGQGKVADYIPALGGVRPDQLGIAVYGNDGQVFSAGDAETLFSIQSISKVFSLVQAIGHSGEDIWQRLGHEPSGQPFNSLVQLEFEQGRPRNPFINAGALVICDINQARFAAPSLSMRDFVRRLCGNRSITSDSKVAESEYQHRSRNAAAAYLMKSFDNFHGDVEDVLRSYFHHCALSMNCIDLAKAFGFLANQGFCAHSGVQILTARQATQVNSIMATSGLYDEAGNFAYRVGLPGKSGVGGGIVAIVPERASVCVWSPALNAAGNSLVGMAALEKLSARVDWSVF.

Ser-61, Asn-111, Glu-155, Asn-162, Tyr-186, Tyr-238, and Val-256 together coordinate substrate.

Belongs to the glutaminase family. Homotetramer.

The enzyme catalyses L-glutamine + H2O = L-glutamate + NH4(+). In Pseudomonas syringae pv. tomato (strain ATCC BAA-871 / DC3000), this protein is Glutaminase.